A 442-amino-acid polypeptide reads, in one-letter code: Serine--tRNA ligase (442 aa).

249-251 contacts L-serine; sequence TSE. 280 to 282 contributes to the ATP binding site; it reads RSE. Residue Glu-303 participates in L-serine binding. 367 to 370 lines the ATP pocket; it reads EISS. Ser-402 serves as a coordination point for L-serine.

The protein belongs to the class-II aminoacyl-tRNA synthetase family. Type-1 seryl-tRNA synthetase subfamily. As to quaternary structure, homodimer. The tRNA molecule binds across the dimer.

It is found in the cytoplasm. The catalysed reaction is tRNA(Ser) + L-serine + ATP = L-seryl-tRNA(Ser) + AMP + diphosphate + H(+). The enzyme catalyses tRNA(Sec) + L-serine + ATP = L-seryl-tRNA(Sec) + AMP + diphosphate + H(+). It functions in the pathway aminoacyl-tRNA biosynthesis; selenocysteinyl-tRNA(Sec) biosynthesis; L-seryl-tRNA(Sec) from L-serine and tRNA(Sec): step 1/1. Its function is as follows. Catalyzes the attachment of serine to tRNA(Ser). Is also able to aminoacylate tRNA(Sec) with serine, to form the misacylated tRNA L-seryl-tRNA(Sec), which will be further converted into selenocysteinyl-tRNA(Sec). The chain is Serine--tRNA ligase from Acidovorax sp. (strain JS42).